We begin with the raw amino-acid sequence, 154 residues long: Proteasome subunit beta type-4 (154 aa).

Met-1 carries the N-acetylmethionine modification. Residues 1-45 constitute a propeptide that is removed on maturation; the sequence is MESILESRSGHWAGGPAPGQFYRIPPTPGSIVDPXSVLYGSPITR. Tyr-102 is modified (phosphotyrosine).

It belongs to the peptidase T1B family. As to quaternary structure, the 26S proteasome consists of a 20S proteasome core and two 19S regulatory subunits. The 20S proteasome core is a barrel-shaped complex made of 28 subunits that are arranged in four stacked rings. The two outer rings are each formed by seven alpha subunits, and the two inner rings are formed by seven beta subunits. The proteolytic activity is exerted by three beta-subunits PSMB5, PSMB6 and PSMB7. Forms a ternary complex with SMAD1 and OAZ1 before PSMB4 is incorporated into the 20S proteasome. Interacts with PRPF19.

The protein resides in the cytoplasm. The protein localises to the nucleus. Its function is as follows. Non-catalytic component of the 20S core proteasome complex involved in the proteolytic degradation of most intracellular proteins. This complex plays numerous essential roles within the cell by associating with different regulatory particles. Associated with two 19S regulatory particles, forms the 26S proteasome and thus participates in the ATP-dependent degradation of ubiquitinated proteins. The 26S proteasome plays a key role in the maintenance of protein homeostasis by removing misfolded or damaged proteins that could impair cellular functions, and by removing proteins whose functions are no longer required. Associated with the PA200 or PA28, the 20S proteasome mediates ubiquitin-independent protein degradation. This type of proteolysis is required in several pathways including spermatogenesis (20S-PA200 complex) or generation of a subset of MHC class I-presented antigenic peptides (20S-PA28 complex). SMAD1/OAZ1/PSMB4 complex mediates the degradation of the CREBBP/EP300 repressor SNIP1. In Sus scrofa (Pig), this protein is Proteasome subunit beta type-4 (PSMB4).